A 456-amino-acid chain; its full sequence is uncharacterized protein (456 aa).

Low complexity predominate over residues 415-428 (SNSNGSSSSGNSSS). A disordered region spans residues 415 to 444 (SNSNGSSSSGNSSSIYNSHLMNDKKKNNNA).

This is an uncharacterized protein from Saccharomyces cerevisiae (strain ATCC 204508 / S288c) (Baker's yeast).